The sequence spans 155 residues: Cell division protein SepF (155 aa).

Positions 22–46 are enriched in basic and acidic residues; the sequence is RYVEEPEQRDERPALEKGRAPKEKQ. The interval 22 to 54 is disordered; that stretch reads RYVEEPEQRDERPALEKGRAPKEKQTAGMEQNQ.

It belongs to the SepF family. Homodimer. Interacts with FtsZ.

The protein localises to the cytoplasm. Cell division protein that is part of the divisome complex and is recruited early to the Z-ring. Probably stimulates Z-ring formation, perhaps through the cross-linking of FtsZ protofilaments. Its function overlaps with FtsA. The polypeptide is Cell division protein SepF (Shouchella clausii (strain KSM-K16) (Alkalihalobacillus clausii)).